We begin with the raw amino-acid sequence, 308 residues long: Malonate utilization transcriptional regulator (308 aa).

Positions 9 to 66 constitute an HTH lysR-type domain; it reads ITFRKLSVFMMFMAKGNIARTAEAMKLSSVSVHRALHTLEEGVGCPLFVHKGRNLLPL. A DNA-binding region (H-T-H motif) is located at residues 26-45; the sequence is IARTAEAMKLSSVSVHRALH.

Belongs to the LysR transcriptional regulatory family.

In terms of biological role, transcriptional regulator of the mau genes for malonate utilization. The protein is Malonate utilization transcriptional regulator (mauR) of Klebsiella pneumoniae.